We begin with the raw amino-acid sequence, 205 residues long: NADH-quinone oxidoreductase subunit J (205 aa).

Helical transmembrane passes span 1–21, 26–46, 54–74, 89–109, and 142–162; these read MPIF…CVVL, VYSV…MILL, LLIV…IMML, LSLS…TVIL, and FMLP…SCIT.

It belongs to the complex I subunit 6 family.

Its subcellular location is the cell membrane. It catalyses the reaction a quinone + NADH + 5 H(+)(in) = a quinol + NAD(+) + 4 H(+)(out). Its function is as follows. NDH-1 shuttles electrons from NADH, via FMN and iron-sulfur (Fe-S) centers, to quinones in the respiratory chain. Couples the redox reaction to proton translocation (for every two electrons transferred, four hydrogen ions are translocated across the cytoplasmic membrane), and thus conserves the redox energy in a proton gradient. The protein is NADH-quinone oxidoreductase subunit J (nuoJ) of Rickettsia typhi (strain ATCC VR-144 / Wilmington).